Reading from the N-terminus, the 26-residue chain is Potassium channel toxin alpha-KTx6 OcyKTx1 (26 aa).

Cysteines 3 and 24 form a disulfide.

This sequence belongs to the short scorpion toxin superfamily. Potassium channel inhibitor family. Alpha-KTx 06 subfamily. Expressed by the venom gland.

The protein localises to the secreted. Its function is as follows. Blocks voltage-gated potassium channels. This chain is Potassium channel toxin alpha-KTx6 OcyKTx1, found in Opisthacanthus cayaporum (South American scorpion).